The primary structure comprises 1297 residues: Protein ENHANCED DOWNY MILDEW 2 (1297 aa).

The PHD-type 1; degenerate zinc-finger motif lies at 222 to 281 (ESVCAICDNGGEILCCEGSCLRSFHATKKDGEDSLCDSLGFNKMQVEAIQKYFCPNCEHK). Zn(2+) is bound by residues Cys237, Cys241, Cys275, Cys278, Cys285, Cys288, Cys306, Cys311, His316, Cys319, Cys346, and His349. A PHD-type 2; atypical zinc finger spans residues 282 to 352 (IHQCFICKNL…EYTCPLHKCS (71 aa)). The PHD-type 3; degenerate zinc finger occupies 351-417 (CSVCENGEVK…RVLIYCQEHE (67 aa)). Residues 445-452 (QRRILESH) carry the Nuclear localization signal 1 motif. Disordered regions lie at residues 471–547 (CGKA…ARDA) and 562–598 (TQEPNPVKPGRVIPVDSKHNKTDSIASKEPGSEIPTL). The span at 475 to 487 (SKNSFRSSFPSSK) shows a compositional bias: low complexity. Positions 492–499 (TKKHGLVS) match the Nuclear localization signal 2 motif. Residues 526–547 (KMMEDSREAGKNKLGVKEARDA) are compositionally biased toward basic and acidic residues. 2 short sequence motifs (nuclear localization signal) span residues 610-617 (MKKATEEI) and 979-986 (LKKEGKTK). 2 stretches are compositionally biased toward basic and acidic residues: residues 969–990 (QSDHLSRRSQLKKEGKTKDYSG) and 1096–1109 (EVSRDRPSSVRTSR). Disordered stretches follow at residues 969–1017 (QSDH…GELS), 1085–1109 (HGCKVQGTGKPEVSRDRPSSVRTSR), and 1260–1297 (FPLPPPPPSDFEMSPRGFAPGPNPNYPYMSRSGGWIND).

In terms of assembly, interacts with WNK8 in nucleus; this interaction is involved in developmental processes regulation but not in RPP7-dependent disease resistance. Interacts with EML1 and EML2 in nucleus. Component of the ASI1-AIPP1-EDM2 (AAE) RNA regulatory complex composed of at least AIPP1/EDM3, ASI1 and EDM2 and may contain CPL2, AIPP2 and AIPP3/BDT1. Binds directly to AIPP1/EDM3. Co-associates with AIPP1/EDM3 to histone H3 lysine 9 dimethylation (H3K9me2)-marked chromatin and transcripts at a critical proximal polyadenylation site of RPP7 to hamper proximal transcript polyadeylation/termination. Phosphorylated by WNK8.

The protein localises to the nucleus. Cellular antisilencing factor and regulator of genome DNA methylation patterns involved in the regulation of chromatin states. Together with SUVH4, monitors repressive epigenetic marks H3K27me1, H3K9me2, and prevents DNA-methylation at CHG sites, affecting especially the expression of transposons and developmentally important genes. Collaboratively with ASI1 and AIPP1/EDM3, the AAE complex regulates alternative RNA processing (e.g. alternative splicing) and epigenetic silencing (e.g. H3K9me2) of intronic heterochromatin-containing genes as well as genic heterochromatin-containing genes by promoting distal 3' polyadenylation. Epigenetic reader that binds DNA and contributes to transcriptional transposable element (TE) silencing by modulating levels of the repressive post-translational histone modifications (PHM) H3K9me2. In cv. Columbia, required for RPP7-dependent disease resistance against the Hyaloperonospora arabidopsidis isolate Hiks1, by promoting levels of RPP7 via alternative polyadenylation (APA), resulting from cooption of epigenetic information at the TE insertion locus COPIA-R7. Exhibits a global role in NLR (nucleotide-binding, leucine-rich repeat) defense genes epigenetic (e.g. H3K9me2 hallmarks) expression control; promotes the accumulation of RPP7, RPP4 and some other proteins, but mediates the repression of several other NLR products, probably to compensate for fitness penalties caused by defense mechanisms. Regulates development processes such as the formation of leaf pavement cells, leaf expansion, fertility and flowering. Prevents FLC accumulation to control flowering. Modulates stomatal development by regulating the methylation-mediated silencing of ERECTA receptor genes (e.g. ER, ERL1 and ERL2) and preventing cell divisions. The protein is Protein ENHANCED DOWNY MILDEW 2 of Arabidopsis thaliana (Mouse-ear cress).